The chain runs to 464 residues: Uronate isomerase (464 aa).

It belongs to the metallo-dependent hydrolases superfamily. Uronate isomerase family.

It catalyses the reaction D-glucuronate = D-fructuronate. It carries out the reaction aldehydo-D-galacturonate = keto-D-tagaturonate. The protein operates within carbohydrate metabolism; pentose and glucuronate interconversion. The polypeptide is Uronate isomerase (Caldicellulosiruptor saccharolyticus (strain ATCC 43494 / DSM 8903 / Tp8T 6331)).